The chain runs to 1036 residues: Chitin synthase 1 (1036 aa).

Positions 1–10 (MDGPPSPTRV) are enriched in pro residues. A disordered region spans residues 1-153 (MDGPPSPTRV…RRPLPPAPLF (153 aa)). Residue N38 is glycosylated (N-linked (GlcNAc...) asparagine). The span at 86–108 (PSIPLSSSNPRSPIRPSTPSRVS) shows a compositional bias: low complexity. N179 carries an N-linked (GlcNAc...) asparagine glycan. The tract at residues 189 to 229 (RASLKSAHSYTTDSTFTEDDDITNEKLNHYGPAPEGRQDRR) is disordered. Residues 194-203 (SAHSYTTDST) show a composition bias toward polar residues. The next 7 membrane-spanning stretches (helical) occupy residues 659–679 (FISL…FYFV), 699–719 (IFVI…ILSL), 733–753 (TMVT…YIVI), 776–796 (IFTN…LMSF), 808–828 (SAQY…YAFC), 908–928 (YVVA…SEAY), and 945–967 (WSVA…INIV). Positions 994 to 1019 (AGLGSGFSESGKTGITSGSGMSGMSL) are disordered. The span at 1001-1019 (SESGKTGITSGSGMSGMSL) shows a compositional bias: low complexity.

This sequence belongs to the chitin synthase family. Class II subfamily.

The protein resides in the cell membrane. It carries out the reaction [(1-&gt;4)-N-acetyl-beta-D-glucosaminyl](n) + UDP-N-acetyl-alpha-D-glucosamine = [(1-&gt;4)-N-acetyl-beta-D-glucosaminyl](n+1) + UDP + H(+). Functionally, polymerizes chitin, a structural polymer of the cell wall and septum, by transferring the sugar moiety of UDP-GlcNAc to the non-reducing end of the growing chitin polymer. CHS1 mainly responsible for normal yeast cell reproductive growth. In Exophiala dermatitidis (strain ATCC 34100 / CBS 525.76 / NIH/UT8656) (Black yeast), this protein is Chitin synthase 1.